The sequence spans 57 residues: Probable mRNA interferase HicA 1 (57 aa).

The protein belongs to the HicA mRNA interferase family. Probably forms a complex with the cognate antitoxin HicB 1 which inhibits the mRNA interferase activity.

In terms of biological role, toxic component of a type II toxin-antitoxin (TA) system. A probable translation-independent mRNA interferase. The polypeptide is Probable mRNA interferase HicA 1 (hicA1) (Photorhabdus laumondii subsp. laumondii (strain DSM 15139 / CIP 105565 / TT01) (Photorhabdus luminescens subsp. laumondii)).